Here is an 818-residue protein sequence, read N- to C-terminus: H(+)/Cl(-) exchange transporter 3 (818 aa).

Residues 1 to 125 are Cytoplasmic-facing; it reads MESEQLFHRG…WEMTKSLYDA (125 aa). A Di-leucine internalization motif; mediates targeting to late endosome and lysosome membranes motif is present at residues 13–17; the sequence is RNSYN. An IP motif; mediates targeting to recycling endosomes motif is present at residues 18-19; the sequence is SI. 3 consecutive short sequence motifs (di-leucine internalization motif; mediates targeting to late endosome and lysosome membranes) follow at residues 28-29, 46-47, and 71-75; these read LL and LLDLL. The chain crosses the membrane as a helical span at residues 126 to 163; the sequence is WSGWLVVTLTGLASGALAGLIDIAADWMTDLKEGICLS. N177 is a glycosylation site (N-linked (GlcNAc...) asparagine). A helical membrane pass occupies residues 209-232; that stretch reads MNYIMYIFWALSFAFLAVSLVKVF. The Selectivity filter part_1 motif lies at 238–242; that stretch reads GSGIP. Residue S239 participates in chloride binding. Positions 241–248 form an intramembrane region, helical; it reads IPEIKTIL. Helical transmembrane passes span 258 to 276 and 282 to 301; these read GKWT…VASG and EGPL…YLFP. A Selectivity filter part_2 motif is present at residues 280–284; the sequence is GKEGP. Intramembrane regions (helical) lie at residues 313–325 and 329–337; these read VLSA…VSVA and PIGGVLFSL. 3 helical membrane-spanning segments follow: residues 349–367, 391–416, and 423–443; these read LWRS…RSIN, FPFI…AWCR, and FGKY…VIAF. Residues N451 and N479 are each glycosylated (N-linked (GlcNAc...) asparagine). 2 consecutive transmembrane segments (helical) span residues 500–520 and 525–544; these read IWQL…TFGI and GLFI…VGIA. The Selectivity filter part_3 signature appears at 525 to 529; that stretch reads GLFIP. Residue F527 coordinates chloride. Intramembrane regions (helical) lie at residues 572–586 and 590–601; these read GLYA…LGGV and TVSLVVIVFELT. Residues 602–605 constitute an intramembrane region (note=Loop between two helices); the sequence is GGLE. Residues 606 to 624 form a helical membrane-spanning segment; sequence YIVPLMAAVMTSKWVGDAF. Over 625 to 818 the chain is Cytoplasmic; the sequence is GREGIYEAHI…NQDPASIMFN (194 aa). Y630 serves as a coordination point for chloride. CBS domains are found at residues 658–722 and 755–812; these read MRPR…ARKK and LDMS…NQDP. Residues 689–691 and 796–799 each bind ATP; these read YNG and TKKD.

The protein belongs to the chloride channel (TC 2.A.49) family. ClC-3/CLCN3 subfamily. In terms of assembly, monomer and homodimer. Forms heterodimers with CLCN4. In terms of processing, N-glycosylated. Detected in kidney, in the apical part of proximal tubule cells (at protein level). Expressed at high levels in the kidney while a low level expression is seen in the brain. Within the brain, it is prominent in the hippocampus, cerebral cortex and olfactory bulb. In terms of tissue distribution, brain, pancreas, kidney, liver, lung, retina, olfactory bulb, and spinal cord. As to expression, pancreas, kidney, liver, lung and retina. Brain, heart, pancreas, kidney, liver, lung, retina, olfactory bulb, and spinal cord. In terms of tissue distribution, expressed at high levels in the liver and at low levels in the brain.

The protein resides in the cytoplasmic vesicle. It localises to the secretory vesicle membrane. Its subcellular location is the lysosome membrane. The protein localises to the late endosome membrane. It is found in the cell membrane. The protein resides in the early endosome membrane. It localises to the recycling endosome membrane. With respect to regulation, inhibited by Cd(2+). May influence large dense-core vesicle exocytosis in adrenal chromaffin cells. In terms of biological role, strongly outwardly rectifying, electrogenic H(+)/Cl(-)exchanger which mediates the exchange of chloride ions against protons. The CLC channel family contains both chloride channels and proton-coupled anion transporters that exchange chloride or another anion for protons. The presence of conserved gating glutamate residues is typical for family members that function as antiporters. Its function is as follows. Strongly outwardly rectifying, electrogenic H(+)/Cl(-)exchanger which mediates the exchange of chloride ions against protons. Facilitates endosomal acidification and chloride accumulation in hepatocytes. Functionally, strongly outwardly rectifying, electrogenic H(+)/Cl(-)exchanger which mediates the exchange of chloride ions against protons. In Mus musculus (Mouse), this protein is H(+)/Cl(-) exchange transporter 3 (Clcn3).